The following is a 215-amino-acid chain: Ran-specific GTPase-activating protein 1 (215 aa).

Composition is skewed to basic and acidic residues over residues 1-18 and 26-35; these read MSAEQEKKTQGTTKEEQK and VASKQTEEAK. Residues 1-78 form a disordered region; sequence MSAEQEKKTQ…ASPEVHFEPI (78 aa). Phosphoserine is present on Ser70. Positions 74–210 constitute a RanBD1 domain; the sequence is HFEPIVKLSA…FEKYQEENAK (137 aa).

This sequence belongs to the RANBP1 family.

The protein resides in the cytoplasm. In terms of biological role, stimulates the GTPase activity in the presence of RNA1. May potentiate the action of RanGAP1 (RNA1), thus playing the role of a negative regulator. The sequence is that of Ran-specific GTPase-activating protein 1 (sbp1) from Schizosaccharomyces pombe (strain 972 / ATCC 24843) (Fission yeast).